Reading from the N-terminus, the 156-residue chain is Small ribosomal subunit protein uS7 (156 aa).

It belongs to the universal ribosomal protein uS7 family. As to quaternary structure, part of the 30S ribosomal subunit. Contacts proteins S9 and S11.

Functionally, one of the primary rRNA binding proteins, it binds directly to 16S rRNA where it nucleates assembly of the head domain of the 30S subunit. Is located at the subunit interface close to the decoding center, probably blocks exit of the E-site tRNA. The sequence is that of Small ribosomal subunit protein uS7 from Salmonella choleraesuis (strain SC-B67).